A 302-amino-acid polypeptide reads, in one-letter code: NADH-cytochrome b5 reductase 2 (302 aa).

Residues 1-41 constitute a propeptide, removed in mature form; that stretch reads MFSRLSRSHSKALPIALGTVAIAAATAFYFANRNQHSFVFN. A helical transmembrane segment spans residues 12-32; the sequence is ALPIALGTVAIAAATAFYFAN. The FAD-binding FR-type domain maps to 51–155; it reads DKWIDLPISK…KGPIMKWKWQ (105 aa). FAD is bound at residue 158 to 193; the sequence is QFKSITLLGAGTGINPLYQLAHHIVENPNDKTKVNL. At S278 the chain carries Phosphoserine.

This sequence belongs to the flavoprotein pyridine nucleotide cytochrome reductase family. FAD is required as a cofactor. Post-translationally, there are two isoforms of NADH-cytochrome b5 reductase, a 34 kDa form (p34) and a 32 kDa form (p32). The p34 form becomes firmly anchored to the outer mitochondrial membrane after an incomplete translocation arrest. The p32 form is formed after translocation of the p34 precursor to the inner mitochondrial membrane, where it is processed by mitochondrial inner membrane peptidase (IMP) complex and released to the intermembrane space.

The protein resides in the mitochondrion intermembrane space. It is found in the mitochondrion outer membrane. It carries out the reaction 2 Fe(III)-[cytochrome b5] + NADH = 2 Fe(II)-[cytochrome b5] + NAD(+) + H(+). Its function is as follows. The outer membrane form may mediate the reduction of outer membrane cytochrome b5, and the soluble inter-membrane space form may transfer electrons from external NADH to cytochrome c, thereby mediating an antimycin-insensitive, energy-coupled oxidation of external NADH by yeast mitochondria. Involved in the reduction of D-erythroascorbyl free radicals. The chain is NADH-cytochrome b5 reductase 2 (MCR1) from Saccharomyces cerevisiae (strain YJM789) (Baker's yeast).